Consider the following 193-residue polypeptide: Xanthine phosphoribosyltransferase (193 aa).

Xanthine contacts are provided by Leu-20 and Asn-27. Position 129-133 (Ala-129–Ala-133) interacts with 5-phospho-alpha-D-ribose 1-diphosphate. Residue Lys-157 coordinates xanthine.

This sequence belongs to the purine/pyrimidine phosphoribosyltransferase family. Xpt subfamily. Homodimer.

The protein localises to the cytoplasm. It catalyses the reaction XMP + diphosphate = xanthine + 5-phospho-alpha-D-ribose 1-diphosphate. Its pathway is purine metabolism; XMP biosynthesis via salvage pathway; XMP from xanthine: step 1/1. In terms of biological role, converts the preformed base xanthine, a product of nucleic acid breakdown, to xanthosine 5'-monophosphate (XMP), so it can be reused for RNA or DNA synthesis. The chain is Xanthine phosphoribosyltransferase from Bifidobacterium animalis subsp. lactis (strain AD011).